We begin with the raw amino-acid sequence, 257 residues long: Flagellar brake protein YcgR 1 (257 aa).

The segment covering M1–A18 has biased composition (polar residues). The tract at residues M1–R30 is disordered. One can recognise a PilZ domain in the interval Q133–T246.

It belongs to the YcgR family. In terms of assembly, monomer. Interacts with the flagellar basal bodies.

It is found in the bacterial flagellum basal body. In terms of biological role, acts as a flagellar brake, regulating swimming and swarming in a bis-(3'-5') cyclic diguanylic acid (c-di-GMP)-dependent manner. Binds 1 c-di-GMP dimer per subunit. Increasing levels of c-di-GMP lead to decreased motility. The sequence is that of Flagellar brake protein YcgR 1 from Paraburkholderia phytofirmans (strain DSM 17436 / LMG 22146 / PsJN) (Burkholderia phytofirmans).